Reading from the N-terminus, the 86-residue chain is Small ribosomal subunit protein bS16 (86 aa).

The protein belongs to the bacterial ribosomal protein bS16 family.

The chain is Small ribosomal subunit protein bS16 from Myxococcus xanthus (strain DK1622).